We begin with the raw amino-acid sequence, 137 residues long: uncharacterized protein (137 aa).

This sequence belongs to the ycf72 family.

The protein localises to the plastid. The protein resides in the chloroplast. This is an uncharacterized protein from Zea mays (Maize).